We begin with the raw amino-acid sequence, 893 residues long: Probable ion channel CASTOR (893 aa).

Residues Met1 to Ala94 form a disordered region. The segment covering Pro65–Ala85 has biased composition (pro residues). A helical transmembrane segment spans residues Thr132–Val152. The stretch at Ser156–Ser178 forms a coiled coil. 3 consecutive transmembrane segments (helical) span residues Leu210–Phe230, Leu266–Val286, and Leu318–Val338. RCK N-terminal domains follow at residues Gln359 to Val500 and Pro619 to Leu792. Positions Thr389–Thr415 form a coiled coil.

It belongs to the castor/pollux (TC 1.A.1.23) family. Expressed in roots, leaves, stems and panicles.

Its subcellular location is the nucleus membrane. Functionally, required for mycorrhizal symbiosis. The sequence is that of Probable ion channel CASTOR from Oryza sativa subsp. japonica (Rice).